We begin with the raw amino-acid sequence, 260 residues long: 4-hydroxy-tetrahydrodipicolinate reductase (260 aa).

NAD(+) is bound at residue 12-17 (GFRGKM). Lys40 lines the NADP(+) pocket. Residues 92–94 (GTT) and 118–121 (APNF) each bind NAD(+). His148 (proton donor/acceptor) is an active-site residue. Position 149 (His149) interacts with (S)-2,3,4,5-tetrahydrodipicolinate. The active-site Proton donor is the Lys152. (S)-2,3,4,5-tetrahydrodipicolinate is bound at residue 158 to 159 (GT).

Belongs to the DapB family.

The protein resides in the cytoplasm. The catalysed reaction is (S)-2,3,4,5-tetrahydrodipicolinate + NAD(+) + H2O = (2S,4S)-4-hydroxy-2,3,4,5-tetrahydrodipicolinate + NADH + H(+). It catalyses the reaction (S)-2,3,4,5-tetrahydrodipicolinate + NADP(+) + H2O = (2S,4S)-4-hydroxy-2,3,4,5-tetrahydrodipicolinate + NADPH + H(+). It participates in amino-acid biosynthesis; L-lysine biosynthesis via DAP pathway; (S)-tetrahydrodipicolinate from L-aspartate: step 4/4. In terms of biological role, catalyzes the conversion of 4-hydroxy-tetrahydrodipicolinate (HTPA) to tetrahydrodipicolinate. The sequence is that of 4-hydroxy-tetrahydrodipicolinate reductase from Lactococcus lactis subsp. lactis (strain IL1403) (Streptococcus lactis).